The chain runs to 184 residues: ATP synthase subunit b, chloroplastic (184 aa).

The chain crosses the membrane as a helical span at residues 27–49 (FATNPINLSVVLGVLIFFGKGVL).

Belongs to the ATPase B chain family. As to quaternary structure, F-type ATPases have 2 components, F(1) - the catalytic core - and F(0) - the membrane proton channel. F(1) has five subunits: alpha(3), beta(3), gamma(1), delta(1), epsilon(1). F(0) has four main subunits: a(1), b(1), b'(1) and c(10-14). The alpha and beta chains form an alternating ring which encloses part of the gamma chain. F(1) is attached to F(0) by a central stalk formed by the gamma and epsilon chains, while a peripheral stalk is formed by the delta, b and b' chains.

The protein localises to the plastid. It is found in the chloroplast thylakoid membrane. Functionally, f(1)F(0) ATP synthase produces ATP from ADP in the presence of a proton or sodium gradient. F-type ATPases consist of two structural domains, F(1) containing the extramembraneous catalytic core and F(0) containing the membrane proton channel, linked together by a central stalk and a peripheral stalk. During catalysis, ATP synthesis in the catalytic domain of F(1) is coupled via a rotary mechanism of the central stalk subunits to proton translocation. In terms of biological role, component of the F(0) channel, it forms part of the peripheral stalk, linking F(1) to F(0). The protein is ATP synthase subunit b, chloroplastic of Ipomoea purpurea (Common morning glory).